Reading from the N-terminus, the 327-residue chain is Glutaminase 1 (327 aa).

Ser-74, Asn-126, Glu-170, Asn-177, Tyr-201, Tyr-253, and Val-271 together coordinate substrate.

It belongs to the glutaminase family. Homotetramer.

It carries out the reaction L-glutamine + H2O = L-glutamate + NH4(+). This Bacillus subtilis (strain 168) protein is Glutaminase 1 (glsA1).